A 40-amino-acid chain; its full sequence is U1-ectatotoxin-Eb1a subunit A (40 aa).

The protein belongs to the ectatomin family. Ectatomin-Eq subfamily. In terms of assembly, heterodimer of subunits A and B; disulfide-linked. Expressed by the venom gland.

Its subcellular location is the secreted. The protein localises to the target cell membrane. This is U1-ectatotoxin-Eb1a subunit A from Ectatomma brunneum (Ant).